A 569-amino-acid chain; its full sequence is Urease subunit alpha (569 aa).

The Urease domain occupies 131–569 (GGFDSHIHFI…LPMAQRYFLF (439 aa)). The Ni(2+) site is built by His-136, His-138, and Lys-219. At Lys-219 the chain carries N6-carboxylysine. His-221 lines the substrate pocket. Positions 248 and 274 each coordinate Ni(2+). His-322 acts as the Proton donor in catalysis. Residue Asp-362 coordinates Ni(2+).

The protein belongs to the metallo-dependent hydrolases superfamily. Urease alpha subunit family. Heterotrimer of UreA (gamma), UreB (beta) and UreC (alpha) subunits. Three heterotrimers associate to form the active enzyme. Ni cation is required as a cofactor. Post-translationally, carboxylation allows a single lysine to coordinate two nickel ions.

The protein resides in the cytoplasm. It carries out the reaction urea + 2 H2O + H(+) = hydrogencarbonate + 2 NH4(+). The protein operates within nitrogen metabolism; urea degradation; CO(2) and NH(3) from urea (urease route): step 1/1. The protein is Urease subunit alpha of Ruegeria pomeroyi (strain ATCC 700808 / DSM 15171 / DSS-3) (Silicibacter pomeroyi).